The following is a 326-amino-acid chain: Beta-ketoacyl-[acyl-carrier-protein] synthase III (326 aa).

Residues Cys116 and His253 contribute to the active site. An ACP-binding region spans residues 254–258; the sequence is QANIR. The active site involves Asn283.

The protein belongs to the thiolase-like superfamily. FabH family. In terms of assembly, homodimer.

It is found in the cytoplasm. It catalyses the reaction malonyl-[ACP] + acetyl-CoA + H(+) = 3-oxobutanoyl-[ACP] + CO2 + CoA. Its pathway is lipid metabolism; fatty acid biosynthesis. Functionally, catalyzes the condensation reaction of fatty acid synthesis by the addition to an acyl acceptor of two carbons from malonyl-ACP. Catalyzes the first condensation reaction which initiates fatty acid synthesis and may therefore play a role in governing the total rate of fatty acid production. Possesses both acetoacetyl-ACP synthase and acetyl transacylase activities. Its substrate specificity determines the biosynthesis of branched-chain and/or straight-chain of fatty acids. The chain is Beta-ketoacyl-[acyl-carrier-protein] synthase III from Jannaschia sp. (strain CCS1).